The primary structure comprises 190 residues: Protein GrpE (190 aa).

A disordered region spans residues 1–41; sequence MAKEKQEEQQKQTAPENEKAPKKDIKKEASDKKGDQTSKLK.

This sequence belongs to the GrpE family. Homodimer.

The protein localises to the cytoplasm. Functionally, participates actively in the response to hyperosmotic and heat shock by preventing the aggregation of stress-denatured proteins, in association with DnaK and GrpE. It is the nucleotide exchange factor for DnaK and may function as a thermosensor. Unfolded proteins bind initially to DnaJ; upon interaction with the DnaJ-bound protein, DnaK hydrolyzes its bound ATP, resulting in the formation of a stable complex. GrpE releases ADP from DnaK; ATP binding to DnaK triggers the release of the substrate protein, thus completing the reaction cycle. Several rounds of ATP-dependent interactions between DnaJ, DnaK and GrpE are required for fully efficient folding. The chain is Protein GrpE from Limosilactobacillus reuteri (strain DSM 20016) (Lactobacillus reuteri).